The sequence spans 1065 residues: Valine--tRNA ligase, mitochondrial (1065 aa).

Residues 1 to 15 constitute a mitochondrion transit peptide; the sequence is MPHLPLASFRPPLWG. Positions 27–52 are disordered; sequence ALCTQPEPHGSPVSRRNREAKQKRLR. Residues 42-52 show a composition bias toward basic and acidic residues; the sequence is RNREAKQKRLR. The short motif at 146 to 156 is the 'HIGH' region element; the sequence is PNVTGSLHIGH. The 'KMSKS' region motif lies at 659-663; it reads KMSKS. Lys-662 is a binding site for ATP.

The protein belongs to the class-I aminoacyl-tRNA synthetase family.

It is found in the mitochondrion. It carries out the reaction tRNA(Val) + L-valine + ATP = L-valyl-tRNA(Val) + AMP + diphosphate. Functionally, catalyzes the attachment of valine to tRNA(Val) in a two-step reaction: valine is first activated by ATP to form Val-AMP and then transferred to the acceptor end of tRNA(Val). This chain is Valine--tRNA ligase, mitochondrial (Vars2), found in Rattus norvegicus (Rat).